Reading from the N-terminus, the 514-residue chain is Cytochrome P450 monooxygenase FUS8 (514 aa).

The chain crosses the membrane as a helical span at residues V24–V44. N-linked (GlcNAc...) asparagine glycosylation is found at N225 and N443. Residue C460 coordinates heme.

This sequence belongs to the cytochrome P450 family. Heme serves as cofactor.

The protein resides in the membrane. The protein operates within mycotoxin biosynthesis. Functionally, cytochrome P450 monooxygenase; part of the gene cluster that mediates the biosynthesis of the mycotoxin fusarin C. Within the cluster, FUS1, FUS2, FUS8 and FUS9 are sufficient for fusarin production. The roles of the other FUS members are yet undetermined. The fusarin C synthetase FUS1 is responsible for the condensation of one acetyl-coenzyme A (CoA) unit with six malonyl-CoA units and the amide linkage of the arising heptaketide and homoserine, subsequently releasing the first intermediate, prefusarin, as an alcohol with an open ring structure. The cytochrome P450 monooxygenase FUS8 participates in multiple oxidation processes at carbon C-20 and is able to use the FUS1 product as substrate, resulting in formation of 20-hydroxy-prefusarin. This reaction seems to be essential before the 2-pyrrolidone ring closure can be catalyzed by FUS2, generating 20-hydroxy-fusarin. FUS8 is able to further oxidizes carbon C-20 after ring closure, resulting in the formation of carboxy-fusarin C. As the last step, FUS9 methylates the hydroxyl group at C-21 to generate fusarin C. Fusarin C can then rearrange to epi-fusarin C, the (z)-isomers, and fusarin A and fusarin D. This chain is Cytochrome P450 monooxygenase FUS8, found in Gibberella fujikuroi (strain CBS 195.34 / IMI 58289 / NRRL A-6831) (Bakanae and foot rot disease fungus).